Here is a 240-residue protein sequence, read N- to C-terminus: MADS-box protein SVP (240 aa).

The MADS-box domain maps to 3–57; the sequence is REKIQIRKIDNATARQVTFSKRRRGLFKKAEELSVLCDADVALIIFSSTGKLFEF. One can recognise a K-box domain in the interval 87–180; that stretch reads QLVENSDHAR…GTQLTEENER (94 aa). Residues 202 to 240 are disordered; it reads VYEEGQSSESITNAGNSTGAPVDSESSDTSLRLGLPYGG. Residues 206 to 220 show a composition bias toward polar residues; the sequence is GQSSESITNAGNSTG.

In terms of assembly, forms a heterodimer with AP1 and SVP. Interacts with the SEU-LUG corepressor complex when complexed to AP1. Interacts with AGL15. Interacts with AGL16. Detected in roots and leaves. Expressed at very low levels in flowers and siliques. Present in floral meristems.

Its subcellular location is the nucleus. In terms of biological role, transcription repressor that inhibit floral transition in the autonomous flowering pathway, independent of photoperiod and temperature. Acts in a dosage-dependent manner. Together with AGL24 and AP1, controls the identity of the floral meristem and regulates expression of class B, C and E genes. Promotes EFM expression to suppress flowering. The polypeptide is MADS-box protein SVP (Arabidopsis thaliana (Mouse-ear cress)).